Consider the following 74-residue polypeptide: ATP synthase subunit 9, mitochondrial (74 aa).

Transmembrane regions (helical) follow at residues 8–28 and 45–72; these read IGAGAATIASAGAAVGIGNVF and LFGYAILGFALTEAIALFALMMAFLILF.

This sequence belongs to the ATPase C chain family. In terms of assembly, F-type ATPases have 2 components, CF(1) - the catalytic core - and CF(0) - the membrane proton channel. CF(1) has five subunits: alpha(3), beta(3), gamma(1), delta(1), epsilon(1). CF(0) has three main subunits: a, b and c.

It is found in the mitochondrion membrane. In terms of biological role, this protein is one of the chains of the nonenzymatic membrane component (F0) of mitochondrial ATPase. The chain is ATP synthase subunit 9, mitochondrial (ATP9) from Pisum sativum (Garden pea).